A 129-amino-acid polypeptide reads, in one-letter code: Azurin iso-2 (129 aa).

The 129-residue stretch at 1–129 (ASCETTVTSG…MMRGTLKLEE (129 aa)) folds into the Plastocyanin-like domain. Cys-3 and Cys-26 are disulfide-bonded. The Cu cation site is built by His-46, Cys-112, His-117, and Met-121.

The protein resides in the periplasm. This methylothroph organism uses azurin in the oxidation of methylamine. Iso-2 is probably the acceptor of electrons from methylamine dehydrogenase. This Methylomonas sp. (strain J) protein is Azurin iso-2.